A 138-amino-acid polypeptide reads, in one-letter code: Putative pre-16S rRNA nuclease (138 aa).

Belongs to the YqgF nuclease family.

Its subcellular location is the cytoplasm. Its function is as follows. Could be a nuclease involved in processing of the 5'-end of pre-16S rRNA. This is Putative pre-16S rRNA nuclease from Salmonella typhimurium (strain LT2 / SGSC1412 / ATCC 700720).